A 302-amino-acid polypeptide reads, in one-letter code: Protease HtpX homolog (302 aa).

A helical membrane pass occupies residues 27-47 (LLMAIGGIIGGTAGMLIALII). Histidine 141 serves as a coordination point for Zn(2+). Glutamate 142 is an active-site residue. Residue histidine 145 coordinates Zn(2+). 2 consecutive transmembrane segments (helical) span residues 151–171 (VLVA…ANMA) and 195–215 (IGAI…QLAI). Glutamate 220 is a binding site for Zn(2+).

It belongs to the peptidase M48B family. Zn(2+) serves as cofactor.

It localises to the cell inner membrane. The polypeptide is Protease HtpX homolog (Aquifex aeolicus (strain VF5)).